The sequence spans 541 residues: Developmental and secondary metabolism regulator VEL1 (541 aa).

In terms of domain architecture, Velvet spans 26–220 (NRHLWYQLTV…ADQGCRVRIR (195 aa)). The short motif at 40–45 (ERARAC) is the Nuclear localization signal element. 2 disordered regions span residues 222–447 (DVRM…MPTQ) and 464–483 (PIEA…TGGK). A compositionally biased stretch (basic and acidic residues) spans 230–244 (GKGSGYDRREEEYAR). Positions 289–298 (APSLPHAPSL) are enriched in low complexity. Composition is skewed to pro residues over residues 299-314 (PHAP…PPAA), 345-355 (APIPPVTPTGP), and 425-439 (SPAP…PAPS). Residues 444 to 472 (MPTQSSLAPLKIASLVSPLPPIEAQTEPL) form a PEST region.

This sequence belongs to the velvet family. VeA subfamily. In terms of assembly, component of the heterotrimeric velvet complex composed of LAE1, VEL1 and VEL2; VEL1 acting as a bridging protein between LAE1 and VEL2.

It localises to the nucleus. It is found in the cytoplasm. Its function is as follows. Component of the velvet transcription factor complex that controls sexual/asexual developmental ratio in response to light, promoting sexual development in the darkness while stimulating asexual sporulation under illumination. The velvet complex acts as a global regulator for secondary metabolite gene expression. Controls the expression of the gliotoxin gene cluster. Plays a key role in mycoparasitism. In Hypocrea virens (strain Gv29-8 / FGSC 10586) (Gliocladium virens), this protein is Developmental and secondary metabolism regulator VEL1.